A 342-amino-acid chain; its full sequence is S-adenosyl-L-methionine-dependent tRNA 4-demethylwyosine synthase (342 aa).

Residues Cys45, Cys58, Cys71, Cys81, Cys85, and Cys88 each contribute to the [4Fe-4S] cluster site. Residues 64-312 (YGIHSHRCLQ…VKHLPGYHIE (249 aa)) form the Radical SAM core domain.

This sequence belongs to the TYW1 family. In terms of assembly, monomer. The cofactor is [4Fe-4S] cluster.

The protein localises to the cytoplasm. It carries out the reaction N(1)-methylguanosine(37) in tRNA(Phe) + pyruvate + S-adenosyl-L-methionine = 4-demethylwyosine(37) in tRNA(Phe) + 5'-deoxyadenosine + L-methionine + CO2 + H2O. Its function is as follows. Component of the wyosine derivatives biosynthesis pathway that catalyzes the condensation of N-methylguanine with 2 carbon atoms from pyruvate to form the tricyclic 4-demethylwyosine (imG-14) on guanosine-37 of tRNA(Phe). This chain is S-adenosyl-L-methionine-dependent tRNA 4-demethylwyosine synthase, found in Pyrococcus abyssi (strain GE5 / Orsay).